We begin with the raw amino-acid sequence, 151 residues long: 3-hydroxyacyl-[acyl-carrier-protein] dehydratase FabZ (151 aa).

H53 is a catalytic residue.

The protein belongs to the thioester dehydratase family. FabZ subfamily.

Its subcellular location is the cytoplasm. The catalysed reaction is a (3R)-hydroxyacyl-[ACP] = a (2E)-enoyl-[ACP] + H2O. Involved in unsaturated fatty acids biosynthesis. Catalyzes the dehydration of short chain beta-hydroxyacyl-ACPs and long chain saturated and unsaturated beta-hydroxyacyl-ACPs. The protein is 3-hydroxyacyl-[acyl-carrier-protein] dehydratase FabZ of Erythrobacter litoralis (strain HTCC2594).